A 1343-amino-acid chain; its full sequence is DNA-directed RNA polymerase subunit beta (1343 aa).

This sequence belongs to the RNA polymerase beta chain family. The RNAP catalytic core consists of 2 alpha, 1 beta, 1 beta' and 1 omega subunit. When a sigma factor is associated with the core the holoenzyme is formed, which can initiate transcription.

It carries out the reaction RNA(n) + a ribonucleoside 5'-triphosphate = RNA(n+1) + diphosphate. In terms of biological role, DNA-dependent RNA polymerase catalyzes the transcription of DNA into RNA using the four ribonucleoside triphosphates as substrates. In Haemophilus influenzae (strain ATCC 51907 / DSM 11121 / KW20 / Rd), this protein is DNA-directed RNA polymerase subunit beta.